The following is a 218-amino-acid chain: Probable nicotinate-nucleotide adenylyltransferase (218 aa).

This sequence belongs to the NadD family.

The catalysed reaction is nicotinate beta-D-ribonucleotide + ATP + H(+) = deamido-NAD(+) + diphosphate. Its pathway is cofactor biosynthesis; NAD(+) biosynthesis; deamido-NAD(+) from nicotinate D-ribonucleotide: step 1/1. In terms of biological role, catalyzes the reversible adenylation of nicotinate mononucleotide (NaMN) to nicotinic acid adenine dinucleotide (NaAD). The chain is Probable nicotinate-nucleotide adenylyltransferase from Sodalis glossinidius (strain morsitans).